Consider the following 115-residue polypeptide: uncharacterized protein (115 aa).

This is an uncharacterized protein from Homo sapiens (Human).